Here is a 238-residue protein sequence, read N- to C-terminus: Ribonuclease PH (238 aa).

Phosphate is bound by residues arginine 86 and 124-126; that span reads GTR.

Belongs to the RNase PH family. As to quaternary structure, homohexameric ring arranged as a trimer of dimers.

The catalysed reaction is tRNA(n+1) + phosphate = tRNA(n) + a ribonucleoside 5'-diphosphate. Phosphorolytic 3'-5' exoribonuclease that plays an important role in tRNA 3'-end maturation. Removes nucleotide residues following the 3'-CCA terminus of tRNAs; can also add nucleotides to the ends of RNA molecules by using nucleoside diphosphates as substrates, but this may not be physiologically important. Probably plays a role in initiation of 16S rRNA degradation (leading to ribosome degradation) during starvation. This Shigella flexneri serotype 5b (strain 8401) protein is Ribonuclease PH.